Consider the following 229-residue polypeptide: DNA mismatch repair protein MutH (229 aa).

Belongs to the MutH family.

The protein localises to the cytoplasm. Functionally, sequence-specific endonuclease that cleaves unmethylated GATC sequences. It is involved in DNA mismatch repair. The polypeptide is DNA mismatch repair protein MutH (Escherichia coli (strain K12 / MC4100 / BW2952)).